Consider the following 153-residue polypeptide: Ribonuclease H (153 aa).

The RNase H type-1 domain occupies 1–142; the sequence is MTDQIEIFTD…ADELARRGVD (142 aa). Asp-10, Glu-48, Asp-70, and Asp-134 together coordinate Mg(2+).

This sequence belongs to the RNase H family. In terms of assembly, monomer. The cofactor is Mg(2+).

The protein resides in the cytoplasm. The catalysed reaction is Endonucleolytic cleavage to 5'-phosphomonoester.. Its function is as follows. Endonuclease that specifically degrades the RNA of RNA-DNA hybrids. The polypeptide is Ribonuclease H (Aromatoleum aromaticum (strain DSM 19018 / LMG 30748 / EbN1) (Azoarcus sp. (strain EbN1))).